A 186-amino-acid chain; its full sequence is Peptidyl-tRNA hydrolase (186 aa).

Tyrosine 14 is a tRNA binding site. The active-site Proton acceptor is histidine 19. Residues tyrosine 64, asparagine 66, and asparagine 112 each coordinate tRNA.

Belongs to the PTH family. As to quaternary structure, monomer.

The protein resides in the cytoplasm. It catalyses the reaction an N-acyl-L-alpha-aminoacyl-tRNA + H2O = an N-acyl-L-amino acid + a tRNA + H(+). Functionally, hydrolyzes ribosome-free peptidyl-tRNAs (with 1 or more amino acids incorporated), which drop off the ribosome during protein synthesis, or as a result of ribosome stalling. Catalyzes the release of premature peptidyl moieties from peptidyl-tRNA molecules trapped in stalled 50S ribosomal subunits, and thus maintains levels of free tRNAs and 50S ribosomes. This is Peptidyl-tRNA hydrolase from Bacillus cereus (strain Q1).